Reading from the N-terminus, the 393-residue chain is NAD(P)H-quinone oxidoreductase subunit H, chloroplastic (393 aa).

The protein belongs to the complex I 49 kDa subunit family. In terms of assembly, NDH is composed of at least 16 different subunits, 5 of which are encoded in the nucleus.

The protein resides in the plastid. It localises to the chloroplast thylakoid membrane. It carries out the reaction a plastoquinone + NADH + (n+1) H(+)(in) = a plastoquinol + NAD(+) + n H(+)(out). The catalysed reaction is a plastoquinone + NADPH + (n+1) H(+)(in) = a plastoquinol + NADP(+) + n H(+)(out). Its function is as follows. NDH shuttles electrons from NAD(P)H:plastoquinone, via FMN and iron-sulfur (Fe-S) centers, to quinones in the photosynthetic chain and possibly in a chloroplast respiratory chain. The immediate electron acceptor for the enzyme in this species is believed to be plastoquinone. Couples the redox reaction to proton translocation, and thus conserves the redox energy in a proton gradient. The polypeptide is NAD(P)H-quinone oxidoreductase subunit H, chloroplastic (Zygnema circumcarinatum (Green alga)).